The primary structure comprises 74 residues: Translation initiation factor IF-1 (74 aa).

Residues 1 to 72 enclose the S1-like domain; that stretch reads MSKEDAIEME…NKGRITYRLK (72 aa).

It belongs to the IF-1 family. Component of the 30S ribosomal translation pre-initiation complex which assembles on the 30S ribosome in the order IF-2 and IF-3, IF-1 and N-formylmethionyl-tRNA(fMet); mRNA recruitment can occur at any time during PIC assembly.

It is found in the cytoplasm. In terms of biological role, one of the essential components for the initiation of protein synthesis. Stabilizes the binding of IF-2 and IF-3 on the 30S subunit to which N-formylmethionyl-tRNA(fMet) subsequently binds. Helps modulate mRNA selection, yielding the 30S pre-initiation complex (PIC). Upon addition of the 50S ribosomal subunit IF-1, IF-2 and IF-3 are released leaving the mature 70S translation initiation complex. The protein is Translation initiation factor IF-1 of Synechococcus sp. (strain JA-2-3B'a(2-13)) (Cyanobacteria bacterium Yellowstone B-Prime).